A 521-amino-acid chain; its full sequence is MSEDRKAIKRALISVYDKTGLEDLAQALHRAGVEIVSTGSTAAKIADLGIPVTPVEELTGFPECLEGRVKTLHPKVHAGILADTRKDDHLRQLDELGVTPFQLVVVNLYPFAETVASGADFDDCVEQIDIGGPSMVRAAAKNHPSVAVVTSPGQYEDVVSVLNTGGFSRAERTKLAAEAFRHTATYDVTVATWISEQLSAADTELEFPGWIGSTSTLARSLRYGENPHQSAALYVSHGASGLAQATQLHGKEMSYNNYTDSDAAWRAAWDHERPCVAIIKHANPCGIAVSDESIAAAHRQAHACDSVSAFGGVIASNREVSVEMAEQVAEIFTEVIIAPSYEEGAVEVLSQKKNIRILQAEAPVREGFETREISGGLLVQERDLIHAEGDNPANWTLAAGEAVSAEVLKDLEFAWTAVRSVKSNAILLAKDGATVGVGMGQVNRVDSARLAVDRAGEERATGSVAASDAFFPFADGFEVLAQAGITAVVQPGGSIRDDEVIEAANKAGVTMYLTGARHFSH.

Residues 1-150 (MSEDRKAIKR…KNHPSVAVVT (150 aa)) enclose the MGS-like domain.

It belongs to the PurH family.

It carries out the reaction (6R)-10-formyltetrahydrofolate + 5-amino-1-(5-phospho-beta-D-ribosyl)imidazole-4-carboxamide = 5-formamido-1-(5-phospho-D-ribosyl)imidazole-4-carboxamide + (6S)-5,6,7,8-tetrahydrofolate. The enzyme catalyses IMP + H2O = 5-formamido-1-(5-phospho-D-ribosyl)imidazole-4-carboxamide. The protein operates within purine metabolism; IMP biosynthesis via de novo pathway; 5-formamido-1-(5-phospho-D-ribosyl)imidazole-4-carboxamide from 5-amino-1-(5-phospho-D-ribosyl)imidazole-4-carboxamide (10-formyl THF route): step 1/1. Its pathway is purine metabolism; IMP biosynthesis via de novo pathway; IMP from 5-formamido-1-(5-phospho-D-ribosyl)imidazole-4-carboxamide: step 1/1. The sequence is that of Bifunctional purine biosynthesis protein PurH from Corynebacterium efficiens (strain DSM 44549 / YS-314 / AJ 12310 / JCM 11189 / NBRC 100395).